Consider the following 262-residue polypeptide: uncharacterized protein (262 aa).

The S4 RNA-binding domain maps to 6 to 70; the sequence is LRINQFLAHY…LKNKKFSVLV (65 aa). Asp-108 functions as the Nucleophile in the catalytic mechanism.

It belongs to the pseudouridine synthase RsuA family.

The catalysed reaction is a uridine in RNA = a pseudouridine in RNA. This is an uncharacterized protein from Helicobacter pylori (strain ATCC 700392 / 26695) (Campylobacter pylori).